The chain runs to 635 residues: Extracellular metalloproteinase 9 (635 aa).

Positions 1-19 (MHGLLLAAGLLTLPLRALA) are cleaved as a signal peptide. The propeptide occupies 20 to 246 (HPGHQSTSIL…IHGVTDYVAD (227 aa)). An N-linked (GlcNAc...) asparagine glycan is attached at Asn274. The segment at 279–307 (TWHSDGNTRYPTTRGNNGIAQDNPSGGTG) is disordered. Asn413 carries an N-linked (GlcNAc...) asparagine glycan. A Zn(2+)-binding site is contributed by His430. Glu431 is an active-site residue. His434 is a binding site for Zn(2+). The N-linked (GlcNAc...) asparagine glycan is linked to Asn475.

The protein belongs to the peptidase M36 family. It depends on Zn(2+) as a cofactor.

It localises to the secreted. In terms of biological role, secreted metalloproteinase that allows assimilation of proteinaceous substrates. This Uncinocarpus reesii (strain UAMH 1704) protein is Extracellular metalloproteinase 9 (MEP9).